Consider the following 602-residue polypeptide: Elongation factor 4 (602 aa).

The 182-residue stretch at 7–188 (ENIRNFSIIA…AIVELIPPPK (182 aa)) folds into the tr-type G domain. GTP-binding positions include 19 to 24 (DHGKST) and 135 to 138 (NKID).

This sequence belongs to the TRAFAC class translation factor GTPase superfamily. Classic translation factor GTPase family. LepA subfamily.

The protein resides in the cell inner membrane. It catalyses the reaction GTP + H2O = GDP + phosphate + H(+). Functionally, required for accurate and efficient protein synthesis under certain stress conditions. May act as a fidelity factor of the translation reaction, by catalyzing a one-codon backward translocation of tRNAs on improperly translocated ribosomes. Back-translocation proceeds from a post-translocation (POST) complex to a pre-translocation (PRE) complex, thus giving elongation factor G a second chance to translocate the tRNAs correctly. Binds to ribosomes in a GTP-dependent manner. This chain is Elongation factor 4, found in Chlamydia abortus (strain DSM 27085 / S26/3) (Chlamydophila abortus).